The chain runs to 502 residues: Glycerol kinase (502 aa).

Thr-12 lines the ADP pocket. ATP contacts are provided by Thr-12, Thr-13, and Ser-14. Thr-12 provides a ligand contact to sn-glycerol 3-phosphate. An ADP-binding site is contributed by Arg-16. Sn-glycerol 3-phosphate contacts are provided by Arg-82, Glu-83, Tyr-134, and Asp-243. Glycerol-binding residues include Arg-82, Glu-83, Tyr-134, Asp-243, and Gln-244. 2 residues coordinate ADP: Thr-265 and Gly-308. Residues Thr-265, Gly-308, Gln-312, and Gly-412 each contribute to the ATP site. Residue Gly-412 participates in ADP binding.

This sequence belongs to the FGGY kinase family.

The catalysed reaction is glycerol + ATP = sn-glycerol 3-phosphate + ADP + H(+). Its pathway is polyol metabolism; glycerol degradation via glycerol kinase pathway; sn-glycerol 3-phosphate from glycerol: step 1/1. Its activity is regulated as follows. Inhibited by fructose 1,6-bisphosphate (FBP). Functionally, key enzyme in the regulation of glycerol uptake and metabolism. Catalyzes the phosphorylation of glycerol to yield sn-glycerol 3-phosphate. This chain is Glycerol kinase, found in Methylobacterium nodulans (strain LMG 21967 / CNCM I-2342 / ORS 2060).